The sequence spans 467 residues: Glutamate--tRNA ligase (467 aa).

The 'HIGH' region motif lies at 12 to 22 (PSPTGYLHIGG). A compositionally biased stretch (basic and acidic residues) spans 114–128 (EQEAKKEKPRYDGRW). The disordered stretch occupies residues 114–140 (EQEAKKEKPRYDGRWRPAPGKTLPTPP). The short motif at 244–248 (KLSKR) is the 'KMSKS' region element. Lys-247 is a binding site for ATP.

It belongs to the class-I aminoacyl-tRNA synthetase family. Glutamate--tRNA ligase type 1 subfamily. As to quaternary structure, monomer.

It is found in the cytoplasm. The catalysed reaction is tRNA(Glu) + L-glutamate + ATP = L-glutamyl-tRNA(Glu) + AMP + diphosphate. Its function is as follows. Catalyzes the attachment of glutamate to tRNA(Glu) in a two-step reaction: glutamate is first activated by ATP to form Glu-AMP and then transferred to the acceptor end of tRNA(Glu). This Azoarcus sp. (strain BH72) protein is Glutamate--tRNA ligase.